The chain runs to 395 residues: Phosphoribulokinase, chloroplastic (395 aa).

The transit peptide at 1–46 directs the protein to the chloroplast; it reads MAVSTIYSTQALNSTHFLTSSSSSKQVFLYRRQPQTNRRFNTLITC. A disulfide bond links Cys61 and Cys100.

It belongs to the phosphoribulokinase family.

The protein localises to the plastid. It is found in the chloroplast. The catalysed reaction is D-ribulose 5-phosphate + ATP = D-ribulose 1,5-bisphosphate + ADP + H(+). The protein operates within carbohydrate biosynthesis; Calvin cycle. Light regulated via thioredoxin by reversible oxidation/reduction of sulfhydryl/disulfide groups. This is Phosphoribulokinase, chloroplastic from Arabidopsis thaliana (Mouse-ear cress).